The chain runs to 260 residues: MDIEQKQAEIIDQLVKRASTCKSEALGPLIIEATSHPSLFAFSEILALPNVAQLEGTTDSVYLDLLRLFAHGTWGDYKCNATRLPHLSPDQILKLKQLTVLTLAESNKVLPYDTLMVELDVSNVRELEDFLINECMYAGIVRGKLDQLKRCFEVPFAAGRDLRPGQLGNMLHTLSNWLNTSENLLISIQDKIKWADNMSEMDKKHRKEAEEGVEEVKKSLSMKGDVDIRGNKEMFGEPSGVMDYEEDGIRPKRRRHPVTR.

In terms of domain architecture, PCI spans 1–159; that stretch reads MDIEQKQAEI…RCFEVPFAAG (159 aa). The disordered stretch occupies residues 228-260; it reads IRGNKEMFGEPSGVMDYEEDGIRPKRRRHPVTR. The segment covering 251–260 has biased composition (basic residues); the sequence is PKRRRHPVTR.

The protein belongs to the CSN7/EIF3M family. CSN7 subfamily. Component of the CSN complex, probably composed of CSN1, CSN2, CSN3, CSN4, CSN5 (CSN5A or CSN5B), CSN6 (CSN6A or CSN6B), CSN7 and CSN8. In the CSN complex, it probably interacts directly with CSN4. Interacts (via PCI domain) with CSN1 (via PCI domain) and CSN8 (via PCI domain), and (via C-terminal tail) with CSN6A, TSO2 and RNR2A. Cannot interact simultaneously with CSN1 and CSN8 to form ternary complexes. Also exists as a monomeric form. Binds to the translation initiation factors TIF3E1 and TIF3H1. In terms of processing, phosphorylated.

It is found in the cytoplasm. It localises to the nucleus. Functionally, component of the COP9 signalosome complex (CSN), a complex involved in various cellular and developmental processes such as photomorphogenesis and auxin and jasmonate responses. The CSN complex is an essential regulator of the ubiquitin (Ubl) conjugation pathway by mediating the deneddylation of the cullin subunits of SCF-type E3 ligase complexes, leading to decrease the Ubl ligase activity of SCF. It is involved in repression of photomorphogenesis in darkness by regulating the activity of COP1-containing Ubl ligase complexes. The complex is also required for degradation of IAA6 by regulating the activity of the Ubl ligase SCF-TIR complex. Regulates the TSO2 subcellular localization. May be involved in nucleic acid binding. The protein is COP9 signalosome complex subunit 7 (CSN7) of Arabidopsis thaliana (Mouse-ear cress).